Reading from the N-terminus, the 150-residue chain is Cytochrome c oxidase subunit 5A, mitochondrial (150 aa).

The transit peptide at 1 to 41 (MLGAALRRCAVAAAARAGPRGLLHSAPTPGPAAAIQSVRCY) directs the protein to the mitochondrion. The SIFI-degron motif lies at 2–17 (LGAALRRCAVAAAARA). N6-acetyllysine occurs at positions 87 and 113. At Thr-141 the chain carries Phosphothreonine.

It belongs to the cytochrome c oxidase subunit 5A family. As to quaternary structure, component of the cytochrome c oxidase (complex IV, CIV), a multisubunit enzyme composed of 14 subunits. The complex is composed of a catalytic core of 3 subunits MT-CO1, MT-CO2 and MT-CO3, encoded in the mitochondrial DNA, and 11 supernumerary subunits COX4I, COX5A, COX5B, COX6A, COX6B, COX6C, COX7A, COX7B, COX7C, COX8 and NDUFA4, which are encoded in the nuclear genome. The complex exists as a monomer or a dimer and forms supercomplexes (SCs) in the inner mitochondrial membrane with NADH-ubiquinone oxidoreductase (complex I, CI) and ubiquinol-cytochrome c oxidoreductase (cytochrome b-c1 complex, complex III, CIII), resulting in different assemblies (supercomplex SCI(1)III(2)IV(1) and megacomplex MCI(2)III(2)IV(2)). Interacts with AFG1L. Interacts with RAB5IF. Post-translationally, in response to mitochondrial stress, the precursor protein is ubiquitinated by the SIFI complex in the cytoplasm before mitochondrial import, leading to its degradation. Within the SIFI complex, UBR4 initiates ubiquitin chain that are further elongated or branched by KCMF1.

It is found in the mitochondrion inner membrane. Its pathway is energy metabolism; oxidative phosphorylation. Its function is as follows. Component of the cytochrome c oxidase, the last enzyme in the mitochondrial electron transport chain which drives oxidative phosphorylation. The respiratory chain contains 3 multisubunit complexes succinate dehydrogenase (complex II, CII), ubiquinol-cytochrome c oxidoreductase (cytochrome b-c1 complex, complex III, CIII) and cytochrome c oxidase (complex IV, CIV), that cooperate to transfer electrons derived from NADH and succinate to molecular oxygen, creating an electrochemical gradient over the inner membrane that drives transmembrane transport and the ATP synthase. Cytochrome c oxidase is the component of the respiratory chain that catalyzes the reduction of oxygen to water. Electrons originating from reduced cytochrome c in the intermembrane space (IMS) are transferred via the dinuclear copper A center (CU(A)) of subunit 2 and heme A of subunit 1 to the active site in subunit 1, a binuclear center (BNC) formed by heme A3 and copper B (CU(B)). The BNC reduces molecular oxygen to 2 water molecules using 4 electrons from cytochrome c in the IMS and 4 protons from the mitochondrial matrix. In Plecturocebus donacophilus (Bolivian gray titi monkey), this protein is Cytochrome c oxidase subunit 5A, mitochondrial (COX5A).